The sequence spans 212 residues: Adenylate kinase (212 aa).

10-15 (GAGKGT) contacts ATP. The NMP stretch occupies residues 30 to 59 (AIGDIFRTIIKTSTSEAELINNYVKQGELI). Residues Arg36, 57–59 (ELI), 85–88 (GYPR), and Gln92 contribute to the AMP site. Residues 122–160 (GRYSCKNCGKIYNRYFVQPKTDNVCDVCGSSTFDYRKDD) are LID. Residue Arg123 participates in ATP binding. Positions 126 and 129 each coordinate Zn(2+). 132–133 (IY) is a binding site for ATP. The Zn(2+) site is built by Cys146 and Cys149. The AMP site is built by Arg157 and Arg168. Residue Lys196 participates in ATP binding.

This sequence belongs to the adenylate kinase family. As to quaternary structure, monomer.

The protein localises to the cytoplasm. The enzyme catalyses AMP + ATP = 2 ADP. It participates in purine metabolism; AMP biosynthesis via salvage pathway; AMP from ADP: step 1/1. Functionally, catalyzes the reversible transfer of the terminal phosphate group between ATP and AMP. Plays an important role in cellular energy homeostasis and in adenine nucleotide metabolism. The polypeptide is Adenylate kinase (Rickettsia conorii (strain ATCC VR-613 / Malish 7)).